The following is a 183-amino-acid chain: ATP-dependent protease subunit HslV (183 aa).

The active site involves Thr13. The Na(+) site is built by Gly168, Cys171, and Thr174.

It belongs to the peptidase T1B family. HslV subfamily. In terms of assembly, a double ring-shaped homohexamer of HslV is capped on each side by a ring-shaped HslU homohexamer. The assembly of the HslU/HslV complex is dependent on binding of ATP.

Its subcellular location is the cytoplasm. It catalyses the reaction ATP-dependent cleavage of peptide bonds with broad specificity.. Allosterically activated by HslU binding. Its function is as follows. Protease subunit of a proteasome-like degradation complex believed to be a general protein degrading machinery. This chain is ATP-dependent protease subunit HslV, found in Xanthomonas campestris pv. campestris (strain ATCC 33913 / DSM 3586 / NCPPB 528 / LMG 568 / P 25).